Here is a 361-residue protein sequence, read N- to C-terminus: UDP-3-O-acylglucosamine N-acyltransferase (361 aa).

His-253 acts as the Proton acceptor in catalysis.

Belongs to the transferase hexapeptide repeat family. LpxD subfamily. In terms of assembly, homotrimer.

It catalyses the reaction a UDP-3-O-[(3R)-3-hydroxyacyl]-alpha-D-glucosamine + a (3R)-hydroxyacyl-[ACP] = a UDP-2-N,3-O-bis[(3R)-3-hydroxyacyl]-alpha-D-glucosamine + holo-[ACP] + H(+). The protein operates within bacterial outer membrane biogenesis; LPS lipid A biosynthesis. In terms of biological role, catalyzes the N-acylation of UDP-3-O-acylglucosamine using 3-hydroxyacyl-ACP as the acyl donor. Is involved in the biosynthesis of lipid A, a phosphorylated glycolipid that anchors the lipopolysaccharide to the outer membrane of the cell. The protein is UDP-3-O-acylglucosamine N-acyltransferase of Burkholderia thailandensis (strain ATCC 700388 / DSM 13276 / CCUG 48851 / CIP 106301 / E264).